A 537-amino-acid chain; its full sequence is Berberine bridge enzyme-like 26 (537 aa).

Residues 1-27 form the signal peptide; sequence MGISKPLPLFSILVLYFSLYTITPTSS. Cys38 and Cys102 form a disulfide bridge. An N-linked (GlcNAc...) asparagine glycan is attached at Asn59. The FAD-binding PCMH-type domain maps to 80–256; that stretch reads SMPKPGFIFS…LAWKIKLVPV (177 aa). The segment at residues 117–181 is a cross-link (6-(S-cysteinyl)-8alpha-(pros-histidyl)-FAD (His-Cys)); it reads HDYEGLSYVS…KVHGFPAGLC (65 aa). A glycan (N-linked (GlcNAc...) asparagine) is linked at Asn306.

Belongs to the oxygen-dependent FAD-linked oxidoreductase family. FAD serves as cofactor. In terms of processing, the FAD cofactor is bound via a bicovalent 6-S-cysteinyl, 8alpha-N1-histidyl FAD linkage.

The protein localises to the secreted. It localises to the cell wall. In Arabidopsis thaliana (Mouse-ear cress), this protein is Berberine bridge enzyme-like 26.